We begin with the raw amino-acid sequence, 248 residues long: Coenzyme F420:L-glutamate ligase (248 aa).

GTP-binding positions include 15 to 18 (IPLI), 45 to 46 (ET), and Lys-50. Asp-115 serves as a coordination point for a divalent metal cation. Asn-118 lines the GTP pocket. A divalent metal cation contacts are provided by Asp-155, Ser-156, and Gln-213. 211–218 (MGQSNEGI) is a GTP binding site.

It belongs to the CofE family. As to quaternary structure, homodimer. It depends on Mg(2+) as a cofactor. Mn(2+) is required as a cofactor. Requires K(+) as cofactor.

It catalyses the reaction oxidized coenzyme F420-0 + GTP + L-glutamate = oxidized coenzyme F420-1 + GDP + phosphate + H(+). The enzyme catalyses oxidized coenzyme F420-1 + GTP + L-glutamate = oxidized coenzyme F420-2 + GDP + phosphate + H(+). The protein operates within cofactor biosynthesis; coenzyme F420 biosynthesis. Its function is as follows. Catalyzes the GTP-dependent successive addition of two or more gamma-linked L-glutamates to the L-lactyl phosphodiester of 7,8-didemethyl-8-hydroxy-5-deazariboflavin (F420-0) to form coenzyme F420-0-glutamyl-glutamate (F420-2) or polyglutamated F420 derivatives. This Methanococcus maripaludis (strain DSM 14266 / JCM 13030 / NBRC 101832 / S2 / LL) protein is Coenzyme F420:L-glutamate ligase.